Here is a 543-residue protein sequence, read N- to C-terminus: CTP synthase (543 aa).

An amidoligase domain region spans residues 1 to 265; it reads MARYIFITGG…DGEVLRHFGL (265 aa). Residue serine 13 coordinates CTP. Serine 13 serves as a coordination point for UTP. Residue 14-19 participates in ATP binding; that stretch reads SLGKGL. Tyrosine 54 is a binding site for L-glutamine. ATP is bound at residue aspartate 71. The Mg(2+) site is built by aspartate 71 and glutamate 139. Residues 146-148, 186-191, and lysine 222 each bind CTP; these read DIE and KTKPTQ. UTP-binding positions include 186-191 and lysine 222; that span reads KTKPTQ. In terms of domain architecture, Glutamine amidotransferase type-1 spans 290–542; that stretch reads TIGVVGKYVG…IAAAVKQARL (253 aa). L-glutamine is bound at residue glycine 354. Cysteine 381 acts as the Nucleophile; for glutamine hydrolysis in catalysis. L-glutamine contacts are provided by residues 382 to 385, glutamate 405, and arginine 470; that span reads LGMQ. Catalysis depends on residues histidine 515 and glutamate 517.

Belongs to the CTP synthase family. Homotetramer.

It carries out the reaction UTP + L-glutamine + ATP + H2O = CTP + L-glutamate + ADP + phosphate + 2 H(+). The enzyme catalyses L-glutamine + H2O = L-glutamate + NH4(+). The catalysed reaction is UTP + NH4(+) + ATP = CTP + ADP + phosphate + 2 H(+). It functions in the pathway pyrimidine metabolism; CTP biosynthesis via de novo pathway; CTP from UDP: step 2/2. With respect to regulation, allosterically activated by GTP, when glutamine is the substrate; GTP has no effect on the reaction when ammonia is the substrate. The allosteric effector GTP functions by stabilizing the protein conformation that binds the tetrahedral intermediate(s) formed during glutamine hydrolysis. Inhibited by the product CTP, via allosteric rather than competitive inhibition. Functionally, catalyzes the ATP-dependent amination of UTP to CTP with either L-glutamine or ammonia as the source of nitrogen. Regulates intracellular CTP levels through interactions with the four ribonucleotide triphosphates. The sequence is that of CTP synthase from Novosphingobium aromaticivorans (strain ATCC 700278 / DSM 12444 / CCUG 56034 / CIP 105152 / NBRC 16084 / F199).